A 284-amino-acid chain; its full sequence is Bifunctional protein FolD (284 aa).

Residues 165–167 (GRG), Thr-192, and Val-233 each bind NADP(+).

It belongs to the tetrahydrofolate dehydrogenase/cyclohydrolase family. In terms of assembly, homodimer.

It catalyses the reaction (6R)-5,10-methylene-5,6,7,8-tetrahydrofolate + NADP(+) = (6R)-5,10-methenyltetrahydrofolate + NADPH. The enzyme catalyses (6R)-5,10-methenyltetrahydrofolate + H2O = (6R)-10-formyltetrahydrofolate + H(+). The protein operates within one-carbon metabolism; tetrahydrofolate interconversion. Catalyzes the oxidation of 5,10-methylenetetrahydrofolate to 5,10-methenyltetrahydrofolate and then the hydrolysis of 5,10-methenyltetrahydrofolate to 10-formyltetrahydrofolate. The sequence is that of Bifunctional protein FolD from Corynebacterium glutamicum (strain R).